The primary structure comprises 169 residues: Putative phosphoesterase SSP1770 (169 aa).

His34 serves as the catalytic Proton donor. 2 consecutive short sequence motifs (HXTX) follow at residues 34 to 37 and 115 to 118; these read HITI and HFTI. The active-site Proton acceptor is the His115.

This sequence belongs to the 2H phosphoesterase superfamily. YjcG family.

This chain is Putative phosphoesterase SSP1770, found in Staphylococcus saprophyticus subsp. saprophyticus (strain ATCC 15305 / DSM 20229 / NCIMB 8711 / NCTC 7292 / S-41).